Here is a 202-residue protein sequence, read N- to C-terminus: Small ribosomal subunit protein uS4 (202 aa).

Residues 15 to 42 (LGDLPGLTRKAAKRSYPPGQHGQARRKR) are disordered. The region spanning 90-152 (NRLDNVCFRI…KCSKLLAEAN (63 aa)) is the S4 RNA-binding domain.

The protein belongs to the universal ribosomal protein uS4 family. As to quaternary structure, part of the 30S ribosomal subunit. Contacts protein S5. The interaction surface between S4 and S5 is involved in control of translational fidelity.

In terms of biological role, one of the primary rRNA binding proteins, it binds directly to 16S rRNA where it nucleates assembly of the body of the 30S subunit. With S5 and S12 plays an important role in translational accuracy. This Synechococcus sp. (strain CC9311) protein is Small ribosomal subunit protein uS4.